The primary structure comprises 594 residues: Solute carrier family 13 member 1 (594 aa).

Helical transmembrane passes span 13–33 (FLLVVFTILVFLPLPLIIRTK), 40–60 (ILFVIAIFWITEALPLSITAL), 77–97 (VASAYFKDFHLLLIGVICLAT), 113–133 (VMMVGVNPAWLTLGFMSSTAF), and 134–154 (LSMWLSNTSTAAMVMPIVEAV). An N-linked (GlcNAc...) asparagine glycan is attached at N174. The segment covering 192–220 (TNEKKEKTKPAPGSSHDKGKVSRKMETEK) has biased composition (basic and acidic residues). The disordered stretch occupies residues 192–226 (TNEKKEKTKPAPGSSHDKGKVSRKMETEKNAVTGA). Helical transmembrane passes span 239-259 (LMCLSVAYSSTIGGLTTITGT), 283-303 (SWFLFSFPVALILLLLSWIWL), 347-367 (IVTLVIFIVMALLWFSRDPGF), 380-400 (GYVTDSTVALVAGILFFLIPA), 461-481 (LSPLGSLPVWLIILISSLIVT), 487-507 (ASNPATITILFPILSPLAEAI), 511-531 (PLQILLPSTLCTSFAFLLPVA), and 552-572 (AGLGVNILGVAVVMLGMFTWI). N590 is a glycosylation site (N-linked (GlcNAc...) asparagine).

It belongs to the SLC13A/DASS transporter (TC 2.A.47) family. NADC subfamily. In terms of tissue distribution, highly expressed in kidney and ileum, detected at lower levels in duodenum/jejunum and colon, and at very low levels in cecum, testis, adrenal and adipose tissues. As to expression, expressed in the kidney.

The protein localises to the apical cell membrane. It catalyses the reaction sulfate(out) + 3 Na(+)(out) = sulfate(in) + 3 Na(+)(in). The enzyme catalyses selenate(out) + 3 Na(+)(out) = selenate(in) + 3 Na(+)(in). It carries out the reaction thiosulfate(out) + 3 Na(+)(out) = thiosulfate(in) + 3 Na(+)(in). In terms of biological role, sodium:sulfate symporter that mediates sulfate reabsorption in the kidney and small intestine. Can also mediate the transport of selenate and thiosulfate. This is Solute carrier family 13 member 1 (Slc13a1) from Mus musculus (Mouse).